The sequence spans 336 residues: Methionine synthase (336 aa).

Zn(2+) contacts are provided by His-210, Cys-212, Glu-234, and Cys-294.

Belongs to the archaeal MetE family. It depends on Zn(2+) as a cofactor.

It participates in amino-acid biosynthesis; L-methionine biosynthesis via de novo pathway. Functionally, catalyzes the transfer of a methyl group to L-homocysteine resulting in methionine formation. The physiological methyl donor is unknown. The polypeptide is Methionine synthase (Thermococcus kodakarensis (strain ATCC BAA-918 / JCM 12380 / KOD1) (Pyrococcus kodakaraensis (strain KOD1))).